Here is a 483-residue protein sequence, read N- to C-terminus: Regulatory protein ViaA (483 aa).

This sequence belongs to the ViaA family. Homodimer. Interacts with RavA.

The protein localises to the cytoplasm. In terms of biological role, component of the RavA-ViaA chaperone complex, which may act on the membrane to optimize the function of some of the respiratory chains. ViaA stimulates the ATPase activity of RavA. The protein is Regulatory protein ViaA of Salmonella paratyphi A (strain ATCC 9150 / SARB42).